Consider the following 455-residue polypeptide: Bifunctional protein GlmU (455 aa).

Residues 1-229 (MYNCAILLAA…FEETMGVNSR (229 aa)) form a pyrophosphorylase region. UDP-N-acetyl-alpha-D-glucosamine contacts are provided by residues 8–11 (LAAG), Lys-22, Gln-73, and 78–79 (GT). Residue Asp-103 participates in Mg(2+) binding. Positions 140, 155, 170, and 227 each coordinate UDP-N-acetyl-alpha-D-glucosamine. Asn-227 is a Mg(2+) binding site. The interval 230 to 250 (LQLAEVEAIMRKRINAMHLEN) is linker. Positions 251–455 (GVTIIDPNNT…EDWVKKKDEK (205 aa)) are N-acetyltransferase. Residues Arg-332 and Lys-350 each coordinate UDP-N-acetyl-alpha-D-glucosamine. The active-site Proton acceptor is His-362. UDP-N-acetyl-alpha-D-glucosamine is bound by residues Tyr-365 and Asn-376. Acetyl-CoA is bound by residues 385–386 (NY), Ala-422, and Arg-439.

The protein in the N-terminal section; belongs to the N-acetylglucosamine-1-phosphate uridyltransferase family. It in the C-terminal section; belongs to the transferase hexapeptide repeat family. In terms of assembly, homotrimer. The cofactor is Mg(2+).

It localises to the cytoplasm. The enzyme catalyses alpha-D-glucosamine 1-phosphate + acetyl-CoA = N-acetyl-alpha-D-glucosamine 1-phosphate + CoA + H(+). The catalysed reaction is N-acetyl-alpha-D-glucosamine 1-phosphate + UTP + H(+) = UDP-N-acetyl-alpha-D-glucosamine + diphosphate. Its pathway is nucleotide-sugar biosynthesis; UDP-N-acetyl-alpha-D-glucosamine biosynthesis; N-acetyl-alpha-D-glucosamine 1-phosphate from alpha-D-glucosamine 6-phosphate (route II): step 2/2. The protein operates within nucleotide-sugar biosynthesis; UDP-N-acetyl-alpha-D-glucosamine biosynthesis; UDP-N-acetyl-alpha-D-glucosamine from N-acetyl-alpha-D-glucosamine 1-phosphate: step 1/1. It functions in the pathway bacterial outer membrane biogenesis; LPS lipid A biosynthesis. Catalyzes the last two sequential reactions in the de novo biosynthetic pathway for UDP-N-acetylglucosamine (UDP-GlcNAc). The C-terminal domain catalyzes the transfer of acetyl group from acetyl coenzyme A to glucosamine-1-phosphate (GlcN-1-P) to produce N-acetylglucosamine-1-phosphate (GlcNAc-1-P), which is converted into UDP-GlcNAc by the transfer of uridine 5-monophosphate (from uridine 5-triphosphate), a reaction catalyzed by the N-terminal domain. This chain is Bifunctional protein GlmU, found in Clostridium tetani (strain Massachusetts / E88).